A 230-amino-acid polypeptide reads, in one-letter code: MKDLPIIALDFESATKVNTFLDQFDEPLFVKIGMELFYQAGPDLIKSIKSRGHDIFLDLKLHDIPNTVEKAMEGLGKLDVDLVNVHAAGGTDMMKAAVRGLHKYSNDTKIIAVTQLTSTTEEMLRNEQNIQTTIEEAVLNYATLTQQAGLDGVVCSPLEAELLTNKLGSNFLKVTPGIRPQGAAVDDQKRITTPEDAKQLGATHIVVGRPITQSENPVESYHTIKESWLG.

Substrate is bound by residues Asp-10, Lys-31, 58–67 (DLKLHDIPNT), Thr-117, Arg-179, Gln-188, Gly-208, and Arg-209. The Proton donor role is filled by Lys-60.

Belongs to the OMP decarboxylase family. Type 1 subfamily. In terms of assembly, homodimer.

It carries out the reaction orotidine 5'-phosphate + H(+) = UMP + CO2. It functions in the pathway pyrimidine metabolism; UMP biosynthesis via de novo pathway; UMP from orotate: step 2/2. Catalyzes the decarboxylation of orotidine 5'-monophosphate (OMP) to uridine 5'-monophosphate (UMP). This chain is Orotidine 5'-phosphate decarboxylase, found in Staphylococcus haemolyticus (strain JCSC1435).